A 567-amino-acid chain; its full sequence is MADLANEEKPAIAPPVFVFQKDKGQKSPAEQKNLSDSGEEPRGEAEAPHHGTGHPESAGEHALEPPAPAGASASTPPPPAPEAQLPPFPRELAGRSAGGSSPEGGEDSDREDGNYCPPVKRERTSSLTQFPPSQSEERSSGFRLKPPTLIHGQAPSAGLPSQKPKEQQRSVLRPAVLQAPQPKALSQTVPSSGTNGVSLPADCTGAVPAASPDTAAWRSPSEAADEVCALEEKEPQKNESSNASEEEACEKKDPATQQAFVFGQNLRDRVKLINESVDEADMENAGHPSADTPTATNYFLQYISSSLENSTNSADASSNKFVFGQNMSERVLSPPKLNEVSSDANRENAAAESGSESSSQEATPEKESLAESAAAYTKATARKCLLEKVEVITGEEAESNVLQMQCKLFVFDKTSQSWVERGRGLLRLNDMASTDDGTLQSRLVMRTQGSLRLILNTKLWAQMQIDKASEKSIRITAMDTEDQGVKVFLISASSKDTGQLYAALHHRILALRSRVEQEQEAKMPAPEPGAAPSNEEDDSDDDDVLAPSGATAAGAGDEGDGQTTGST.

Basic and acidic residues predominate over residues 1 to 10 (MADLANEEKP). 3 disordered regions span residues 1–263 (MADL…FVFG), 332–373 (LSPP…AESA), and 515–567 (VEQE…TGST). Ala2 carries the post-translational modification N-acetylalanine. Lys9 and Lys21 each carry N6-acetyllysine. A compositionally biased stretch (basic and acidic residues) spans 39–49 (EEPRGEAEAPH). A Phosphothreonine modification is found at Thr75. The span at 75-89 (TPPPPAPEAQLPPFP) shows a compositional bias: pro residues. A phosphoserine mark is found at Ser100, Ser101, and Ser108. The short motif at 117–125 (PPVKRERTS) is the Nuclear localization signal element. A Phosphothreonine modification is found at Thr124. Polar residues-rich tracts occupy residues 125–134 (SSLTQFPPSQ) and 184–197 (ALSQ…TNGV). Ser126 carries the phosphoserine modification. Residues Ser219, Ser333, Ser353, Ser355, and Ser372 each carry the phosphoserine modification. Low complexity predominate over residues 347–362 (ENAAAESGSESSSQEA). Positions 378–518 (KATARKCLLE…LALRSRVEQE (141 aa)) constitute a RanBD1 domain. Residues 534–544 (NEEDDSDDDDV) show a composition bias toward acidic residues. Ser539 carries the post-translational modification Phosphoserine. Low complexity predominate over residues 549–567 (GATAAGAGDEGDGQTTGST).

In terms of assembly, interacts with CHC1 in a Ran-stimulated manner. Interacts with XPO1. Interacts (via its C-terminal R domain) with SMAD2 (dephosphorylated form via its MH1 and MH2 domains); the interaction results in the nuclear export of SMAD2 and termination of the TGF-beta signaling. Interacts (via its C-terminal R domain) with SMAD3 (dephosphorylated form via its MH1 domain); the interaction results in the nuclear export of SMAD3 and termination of the TGF-beta signaling. Phosphorylation at Ser-126 promotes its import into the nucleus. Widely expressed with high levels in testis and heart.

It localises to the cytoplasm. The protein resides in the nucleus. Acts as a cofactor for XPO1/CRM1-mediated nuclear export, perhaps as export complex scaffolding protein. Bound to XPO1/CRM1, stabilizes the XPO1/CRM1-cargo interaction. In the absence of Ran-bound GTP prevents binding of XPO1/CRM1 to the nuclear pore complex. Binds to CHC1/RCC1 and increases the guanine nucleotide exchange activity of CHC1/RCC1. Recruits XPO1/CRM1 to CHC1/RCC1 in a Ran-dependent manner. Negative regulator of TGF-beta signaling through interaction with the R-SMAD proteins, SMAD2 and SMAD3, and mediating their nuclear export. This Homo sapiens (Human) protein is Ran-binding protein 3 (RANBP3).